The primary structure comprises 124 residues: MACTFEQILETIENLTVKELNELVKLFEEKFDVSAQPTVVAGAAGGAAGGAGEEKTEFDVILKDAGAKKINVIKVVRQITGAGLKEAKEIVDGAPSTIKEAVSKEEAEEIKKQLEEAGATVEVK.

It belongs to the bacterial ribosomal protein bL12 family. As to quaternary structure, homodimer. Part of the ribosomal stalk of the 50S ribosomal subunit. Forms a multimeric L10(L12)X complex, where L10 forms an elongated spine to which 2 to 4 L12 dimers bind in a sequential fashion. Binds GTP-bound translation factors.

Forms part of the ribosomal stalk which helps the ribosome interact with GTP-bound translation factors. Is thus essential for accurate translation. In Nautilia profundicola (strain ATCC BAA-1463 / DSM 18972 / AmH), this protein is Large ribosomal subunit protein bL12.